Reading from the N-terminus, the 294-residue chain is N-acetylmuramic acid 6-phosphate etherase (294 aa).

Residues valine 54–lysine 217 form the SIS domain. The active-site Proton donor is the glutamate 82. The active site involves glutamate 113.

It belongs to the GCKR-like family. MurNAc-6-P etherase subfamily. Homodimer.

The enzyme catalyses N-acetyl-D-muramate 6-phosphate + H2O = N-acetyl-D-glucosamine 6-phosphate + (R)-lactate. The protein operates within amino-sugar metabolism; N-acetylmuramate degradation. In terms of biological role, specifically catalyzes the cleavage of the D-lactyl ether substituent of MurNAc 6-phosphate, producing GlcNAc 6-phosphate and D-lactate. This is N-acetylmuramic acid 6-phosphate etherase from Bacillus cereus (strain AH187).